We begin with the raw amino-acid sequence, 388 residues long: Succinate--CoA ligase [ADP-forming] subunit beta (388 aa).

One can recognise an ATP-grasp domain in the interval 9–245; it reads KELLAGYGLP…KSQENERELK (237 aa). ATP is bound by residues K46, 53 to 55, E100, Y103, and E108; that span reads GRG. 2 residues coordinate Mg(2+): N200 and D214. Substrate contacts are provided by residues N265 and 322–324; that span reads GIV.

Belongs to the succinate/malate CoA ligase beta subunit family. Heterotetramer of two alpha and two beta subunits. Requires Mg(2+) as cofactor.

It catalyses the reaction succinate + ATP + CoA = succinyl-CoA + ADP + phosphate. The catalysed reaction is GTP + succinate + CoA = succinyl-CoA + GDP + phosphate. Its pathway is carbohydrate metabolism; tricarboxylic acid cycle; succinate from succinyl-CoA (ligase route): step 1/1. In terms of biological role, succinyl-CoA synthetase functions in the citric acid cycle (TCA), coupling the hydrolysis of succinyl-CoA to the synthesis of either ATP or GTP and thus represents the only step of substrate-level phosphorylation in the TCA. The beta subunit provides nucleotide specificity of the enzyme and binds the substrate succinate, while the binding sites for coenzyme A and phosphate are found in the alpha subunit. The chain is Succinate--CoA ligase [ADP-forming] subunit beta from Neisseria meningitidis serogroup C (strain 053442).